The following is a 270-amino-acid chain: Small ribosomal subunit protein uS2 (270 aa).

Belongs to the universal ribosomal protein uS2 family. As to quaternary structure, component of the small ribosomal subunit. Mature ribosomes consist of a small (40S) and a large (60S) subunit. The 40S subunit contains about 33 different proteins and 1 molecule of RNA (18S). The 60S subunit contains about 49 different proteins and 3 molecules of RNA (28S, 5.8S and 5S). Interacts with oho23B/rpS21.

The protein resides in the cytoplasm. Its subcellular location is the nucleus. In terms of biological role, required for the assembly and/or stability of the 40S ribosomal subunit. Required for the processing of the 20S rRNA-precursor to mature 18S rRNA in a late step of the maturation of 40S ribosomal subunits. Required during oogenesis and imaginal development. The protein is Small ribosomal subunit protein uS2 of Drosophila persimilis (Fruit fly).